We begin with the raw amino-acid sequence, 173 residues long: Putative metal-dependent hydrolase BcerKBAB4_2443 (173 aa).

3 residues coordinate Zn(2+): H65, H156, and H160.

This sequence belongs to the metal hydrolase YfiT family. In terms of assembly, homodimer. It depends on Zn(2+) as a cofactor.

The protein resides in the cytoplasm. In terms of biological role, possible metal-dependent hydrolase. This Bacillus mycoides (strain KBAB4) (Bacillus weihenstephanensis) protein is Putative metal-dependent hydrolase BcerKBAB4_2443.